Reading from the N-terminus, the 154-residue chain is Endoribonuclease YbeY (154 aa).

Residues His120, His124, and His130 each contribute to the Zn(2+) site.

It belongs to the endoribonuclease YbeY family. Requires Zn(2+) as cofactor.

Its subcellular location is the cytoplasm. In terms of biological role, single strand-specific metallo-endoribonuclease involved in late-stage 70S ribosome quality control and in maturation of the 3' terminus of the 16S rRNA. The sequence is that of Endoribonuclease YbeY from Leptospira biflexa serovar Patoc (strain Patoc 1 / Ames).